We begin with the raw amino-acid sequence, 507 residues long: Efflux pump ustT (507 aa).

Helical transmembrane passes span 59–79 (IAVV…IIVA), 146–166 (LLIA…VTWF), 180–200 (IWQL…AMIA), 216–236 (HAAV…LANF), 240–260 (IPVF…YVVV), 316–336 (VLLI…SGIT), 359–379 (AGVN…ILVK), 398–418 (VCLI…TLVF), 421–441 (TVFA…TGMV), 449–469 (VFTG…PMLA), and 481–501 (IWVG…LGAI).

It belongs to the major facilitator superfamily.

It is found in the cell membrane. Its pathway is mycotoxin biosynthesis. In terms of biological role, efflux pump; part of the gene cluster that mediates the biosynthesis of the secondary metabolite ustiloxin B, an antimitotic tetrapeptide. Probably involved in self-resistance through the export of ustiloxin B. This Aspergillus flavus (strain ATCC 200026 / FGSC A1120 / IAM 13836 / NRRL 3357 / JCM 12722 / SRRC 167) protein is Efflux pump ustT.